The chain runs to 257 residues: Adenylate kinase (257 aa).

52-57 serves as a coordination point for ATP; sequence GAGKGT. The NMP stretch occupies residues 72–101; the sequence is ATGDMLRSQVAKKTELGKEAKKIMDQGGLV. Residues threonine 73, arginine 78, 99–101, 128–131, and glutamine 135 contribute to the AMP site; these read GLV and GFPR. The interval 169–206 is LID; the sequence is GRLVHPASGRSYHKIFNPPKNDMKDDVTGEPLIQRSDD. ATP is bound by residues arginine 170 and 179–180; that span reads SY. AMP is bound by residues arginine 203 and arginine 214. Residue glutamine 242 participates in ATP binding.

Belongs to the adenylate kinase family. AK2 subfamily. As to quaternary structure, monomer.

The protein localises to the cytoplasm. It localises to the cytosol. It is found in the mitochondrion intermembrane space. It catalyses the reaction AMP + ATP = 2 ADP. Its function is as follows. Catalyzes the reversible transfer of the terminal phosphate group between ATP and AMP. Plays an important role in cellular energy homeostasis and in adenine nucleotide metabolism. Adenylate kinase activity is critical for regulation of the phosphate utilization and the AMP de novo biosynthesis pathways. The sequence is that of Adenylate kinase (adk1) from Neosartorya fischeri (strain ATCC 1020 / DSM 3700 / CBS 544.65 / FGSC A1164 / JCM 1740 / NRRL 181 / WB 181) (Aspergillus fischerianus).